The following is a 388-amino-acid chain: Mannitol-1-phosphate 5-dehydrogenase (388 aa).

5–16 is a binding site for NAD(+); that stretch reads AIQFGGGNIGRG. K213 is a catalytic residue.

It belongs to the mannitol dehydrogenase family. As to quaternary structure, monomer.

The catalysed reaction is D-mannitol 1-phosphate + NAD(+) = beta-D-fructose 6-phosphate + NADH + H(+). Functionally, catalyzes the NAD(H)-dependent interconversion of D-fructose 6-phosphate and D-mannitol 1-phosphate in the mannitol metabolic pathway. In Aspergillus terreus (strain NIH 2624 / FGSC A1156), this protein is Mannitol-1-phosphate 5-dehydrogenase (mpdA).